The chain runs to 390 residues: Outer membrane protein assembly factor BamB (390 aa).

A signal peptide spans 1–25 (MPVLRDRIPRRGFFLGLALLAALSG). A lipid anchor (N-palmitoyl cysteine) is attached at Cys26. The S-diacylglycerol cysteine moiety is linked to residue Cys26.

It belongs to the BamB family. In terms of assembly, part of the Bam complex.

It is found in the cell outer membrane. In terms of biological role, part of the outer membrane protein assembly complex, which is involved in assembly and insertion of beta-barrel proteins into the outer membrane. The polypeptide is Outer membrane protein assembly factor BamB (Marinobacter adhaerens (strain DSM 23420 / HP15)).